Here is a 166-residue protein sequence, read N- to C-terminus: Dynein regulatory complex protein 8 (166 aa).

The 36-residue stretch at 95–130 folds into the EF-hand domain; it reads DDYHTLLRAFRAFDPDGRGFIDAESFKSLLTGKGEA.

This sequence belongs to the DRC8 family. In terms of assembly, component of the nexin-dynein regulatory complex (N-DRC).

It localises to the cytoplasm. The protein resides in the cytoskeleton. The protein localises to the flagellum axoneme. Functionally, component of the nexin-dynein regulatory complex (N-DRC), a key regulator of ciliary/flagellar motility which maintains the alignment and integrity of the distal axoneme and regulates microtubule sliding in motile axonemes. The chain is Dynein regulatory complex protein 8 from Chlamydomonas reinhardtii (Chlamydomonas smithii).